The following is a 211-amino-acid chain: 3-demethoxyubiquinol 3-hydroxylase (211 aa).

Glu60, Glu90, His93, Glu142, Glu174, and His177 together coordinate Fe cation.

The protein belongs to the COQ7 family. Fe cation is required as a cofactor.

Its subcellular location is the cell membrane. The enzyme catalyses a 5-methoxy-2-methyl-3-(all-trans-polyprenyl)benzene-1,4-diol + AH2 + O2 = a 3-demethylubiquinol + A + H2O. The protein operates within cofactor biosynthesis; ubiquinone biosynthesis. Its function is as follows. Catalyzes the hydroxylation of 2-nonaprenyl-3-methyl-6-methoxy-1,4-benzoquinol during ubiquinone biosynthesis. The protein is 3-demethoxyubiquinol 3-hydroxylase of Francisella tularensis subsp. holarctica (strain FTNF002-00 / FTA).